Here is a 175-residue protein sequence, read N- to C-terminus: Shikimate kinase (175 aa).

12–19 (GGRASGKS) provides a ligand contact to ATP.

This sequence belongs to the shikimate kinase family.

It is found in the cytoplasm. It catalyses the reaction shikimate + ATP = 3-phosphoshikimate + ADP + H(+). It participates in metabolic intermediate biosynthesis; chorismate biosynthesis; chorismate from D-erythrose 4-phosphate and phosphoenolpyruvate: step 5/7. The polypeptide is Shikimate kinase (Nitratidesulfovibrio vulgaris (strain ATCC 29579 / DSM 644 / CCUG 34227 / NCIMB 8303 / VKM B-1760 / Hildenborough) (Desulfovibrio vulgaris)).